A 199-amino-acid chain; its full sequence is Pneumococcal vaccine antigen A homolog (199 aa).

It is found in the cell surface. The sequence is that of Pneumococcal vaccine antigen A homolog (pvaA) from Streptococcus pyogenes serotype M3 (strain ATCC BAA-595 / MGAS315).